Reading from the N-terminus, the 156-residue chain is MALEKSLVLLPLLVLILLVLGWVQPSLGKESRAKKFQRQHVDSDSSPSSSSTYCNQMMRRRNMTQGRCKPVNTFVHEPLVDVQNVCFQEKVTCKNGQGNCYKSNSSMRITDCRLTNGSRYPNCAYRTSPKERHIIVACEGSPYVPVHFDASVEDST.

A signal peptide spans 1-28 (MALEKSLVLLPLLVLILLVLGWVQPSLG). The span at 33–43 (AKKFQRQHVDS) shows a compositional bias: basic and acidic residues. Positions 33–53 (AKKFQRQHVDSDSSPSSSSTY) are disordered. Residues Lys-35 and Arg-38 each contribute to the substrate site. His-40 acts as the Proton acceptor in catalysis. 4 disulfide bridges follow: Cys-54–Cys-112, Cys-68–Cys-123, Cys-86–Cys-138, and Cys-93–Cys-100. Asn-62 carries an N-linked (GlcNAc...) asparagine glycan. Residues 69–73 (KPVNT) and Lys-94 contribute to the substrate site. Asn-104 carries an N-linked (GlcNAc...) asparagine glycan. Arg-113 contacts substrate. Asn-116 is a glycosylation site (N-linked (GlcNAc...) asparagine). His-147 (proton donor) is an active-site residue.

This sequence belongs to the pancreatic ribonuclease family. As to quaternary structure, monomer. Interacts with and forms tight 1:1 complexes with RNH1. Dimerization of two such complexes may occur. Interaction with RNH1 inhibits this protein. Pancreas and other tissues and body fluids (indicating it may have other physiological functions besides its role in digestion).

It is found in the secreted. The enzyme catalyses an [RNA] containing cytidine + H2O = an [RNA]-3'-cytidine-3'-phosphate + a 5'-hydroxy-ribonucleotide-3'-[RNA].. The catalysed reaction is an [RNA] containing uridine + H2O = an [RNA]-3'-uridine-3'-phosphate + a 5'-hydroxy-ribonucleotide-3'-[RNA].. Functionally, endonuclease that catalyzes the cleavage of RNA on the 3' side of pyrimidine nucleotides. Acts on single-stranded and double-stranded RNA. This is Ribonuclease pancreatic (RNASE1) from Pan troglodytes (Chimpanzee).